The sequence spans 1205 residues: U2 snRNP component prp10 (1205 aa).

Disordered stretches follow at residues 39–58 (QKEA…EGTQ), 122–175 (YADE…GRSY), and 202–254 (GTLK…RRSR). A compositionally biased stretch (polar residues) spans 44–58 (KNSSTNGSVNIEGTQ). The span at 130 to 153 (MQERQSKKQIQDRESDYQKQRYDR) shows a compositional bias: basic and acidic residues. HEAT repeat units follow at residues 393 to 429 (LRER…DFGA), 431 to 473 (ALFN…PFTH), 475 to 505 (ILVV…AKAS), 506 to 540 (GLAH…ASAL), 541 to 578 (GVPA…LLGC), 582 to 619 (PHLK…AATP), 665 to 702 (HFTR…TDGV), 745 to 782 (VGSR…SLGV), 828 to 865 (PYLP…VLKA), 912 to 949 (PPIR…RGSE), 954 to 991 (REWM…AIGP), 993 to 1024 (DVLA…AETC), 1025 to 1061 (MPFT…YIGE), 1065 to 1102 (DYVY…GCVG), 1107 to 1142 (DAMI…RNCI), and 1143 to 1179 (GVGP…QSAD).

The protein belongs to the SF3B1 family. In terms of assembly, belongs to the 40S cdc5-associated complex (or cwf complex), a spliceosome sub-complex reminiscent of a late-stage spliceosome composed of the U2, U5 and U6 snRNAs and at least brr2, cdc5, cwf2/prp3, cwf3/syf1, cwf4/syf3, cwf5/ecm2, spp42/cwf6, cwf7/spf27, cwf8, cwf9, cwf10, cwf11, cwf12, prp45/cwf13, cwf14, cwf15, cwf16, cwf17, cwf18, cwf19, cwf20, cwf21, cwf22, cwf23, cwf24, cwf25, cwf26, cyp7/cwf27, cwf28, cwf29/ist3, lea1, msl1, prp5/cwf1, prp10, prp12/sap130, prp17, prp22, sap61, sap62, sap114, sap145, slu7, smb1, smd1, smd3, smf1, smg1 and syf2.

It localises to the nucleus. Contacts pre-mRNA on both sides of the branch site early in spliceosome assembly. The chain is U2 snRNP component prp10 (prp10) from Schizosaccharomyces pombe (strain 972 / ATCC 24843) (Fission yeast).